We begin with the raw amino-acid sequence, 438 residues long: V-type ATP synthase beta chain (438 aa).

The protein belongs to the ATPase alpha/beta chains family.

Produces ATP from ADP in the presence of a proton gradient across the membrane. The V-type beta chain is a regulatory subunit. The chain is V-type ATP synthase beta chain (atpB) from Chlamydia pneumoniae (Chlamydophila pneumoniae).